The sequence spans 159 residues: Probable minor fimbrial protein (159 aa).

Residues 1 to 6 constitute a propeptide, leader sequence; that stretch reads MKKMHG. At phenylalanine 7 the chain carries N-methylphenylalanine. A helical transmembrane segment spans residues 7-27; that stretch reads FTLIELMIVVAIIGVLASTAL. 2 disulfide bridges follow: cysteine 56–cysteine 71 and cysteine 140–cysteine 153.

The protein belongs to the N-Me-Phe pilin family. As to quaternary structure, the pili are polar flexible filaments of about 5.4 nanometers diameter and 2.5 micrometers average length; they consist of only a single polypeptide chain arranged in a helical configuration of five subunits per turn in the assembled pilus.

It localises to the fimbrium. The protein localises to the membrane. The protein is Probable minor fimbrial protein (fimZ) of Dichelobacter nodosus (Bacteroides nodosus).